The sequence spans 187 residues: Dirigent protein 23 (187 aa).

A signal peptide spans 1–24; that stretch reads MAKEEYVSRMLVMLIMIMPLVAQG. N-linked (GlcNAc...) asparagine glycosylation occurs at Asn-182.

The protein belongs to the plant dirigent protein family. In terms of assembly, homodimer.

Its subcellular location is the secreted. It localises to the extracellular space. It is found in the apoplast. Functionally, dirigent proteins impart stereoselectivity on the phenoxy radical-coupling reaction, yielding optically active lignans from two molecules of coniferyl alcohol in the biosynthesis of lignans, flavonolignans, and alkaloids and thus plays a central role in plant secondary metabolism. This is Dirigent protein 23 (DIR23) from Arabidopsis thaliana (Mouse-ear cress).